The following is a 205-amino-acid chain: ATP phosphoribosyltransferase (205 aa).

The protein belongs to the ATP phosphoribosyltransferase family. Short subfamily. In terms of assembly, heteromultimer composed of HisG and HisZ subunits.

Its subcellular location is the cytoplasm. It carries out the reaction 1-(5-phospho-beta-D-ribosyl)-ATP + diphosphate = 5-phospho-alpha-D-ribose 1-diphosphate + ATP. It participates in amino-acid biosynthesis; L-histidine biosynthesis; L-histidine from 5-phospho-alpha-D-ribose 1-diphosphate: step 1/9. Its function is as follows. Catalyzes the condensation of ATP and 5-phosphoribose 1-diphosphate to form N'-(5'-phosphoribosyl)-ATP (PR-ATP). Has a crucial role in the pathway because the rate of histidine biosynthesis seems to be controlled primarily by regulation of HisG enzymatic activity. The chain is ATP phosphoribosyltransferase from Vesicomyosocius okutanii subsp. Calyptogena okutanii (strain HA).